Reading from the N-terminus, the 338-residue chain is 3-phosphoshikimate 1-carboxyvinyltransferase 2 (338 aa).

Residue R25 participates in phosphoenolpyruvate binding. 3-phosphoshikimate is bound by residues S72, S73, Q74, S100, D225, and K252. Phosphoenolpyruvate is bound at residue Q74. D225 serves as the catalytic Proton acceptor. R256, R298, and K323 together coordinate phosphoenolpyruvate.

It belongs to the EPSP synthase family.

The protein localises to the plastid. It localises to the chloroplast. The catalysed reaction is 3-phosphoshikimate + phosphoenolpyruvate = 5-O-(1-carboxyvinyl)-3-phosphoshikimate + phosphate. It functions in the pathway metabolic intermediate biosynthesis; chorismate biosynthesis; chorismate from D-erythrose 4-phosphate and phosphoenolpyruvate: step 6/7. Its function is as follows. Catalyzes the transfer of the enolpyruvyl moiety of phosphoenolpyruvate (PEP) to the 5-hydroxyl of shikimate-3-phosphate (S3P) to produce enolpyruvyl shikimate-3-phosphate and inorganic phosphate. The protein is 3-phosphoshikimate 1-carboxyvinyltransferase 2 (EPSPS-2) of Nicotiana tabacum (Common tobacco).